Reading from the N-terminus, the 596-residue chain is Arrestin domain-containing protein C31A2.12 (596 aa).

Residues 194–211 (AYAIGSYIPIHFVLVPLL) form a helical membrane-spanning segment. Disordered stretches follow at residues 363–387 (NLDTPLPSGATTPRRRDSMEPTYAS) and 405–446 (QQQP…VITR). Phosphothreonine occurs at positions 373 and 374. Polar residues-rich tracts occupy residues 405–420 (QQQPQGRSPNEHSPSN) and 430–446 (SLGSNPSSGAASAVITR). Phosphoserine is present on residues S452, S474, S493, and S497. The tract at residues 493–596 (SRPPSPGIVT…MLPSGFSRRN (104 aa)) is disordered. 2 positions are modified to phosphothreonine: T502 and T507. The span at 504–522 (PQRTSPSFFVSPTESTRQS) shows a compositional bias: polar residues. S514 bears the Phosphoserine mark. A compositionally biased stretch (low complexity) spans 531–555 (HSTSSSSGISPSHSSASLAHLSQAS).

The protein belongs to the arrestin family.

It localises to the membrane. This is Arrestin domain-containing protein C31A2.12 from Schizosaccharomyces pombe (strain 972 / ATCC 24843) (Fission yeast).